The primary structure comprises 1237 residues: GTPase activating protein BUD2 (1237 aa).

The segment covering 79–110 has biased composition (low complexity); that stretch reads GSGKSSISQPPPTTSTRRNLLRKSSNLNSSDQ. A disordered region spans residues 79 to 124; that stretch reads GSGKSSISQPPPTTSTRRNLLRKSSNLNSSDQSHSKSSEDNEHQPP. Residues 111 to 121 are compositionally biased toward basic and acidic residues; that stretch reads SHSKSSEDNEH. The C2 domain maps to 381–503; sequence NVEHPQLYDF…KQIKTTSTIM (123 aa). The 269-residue stretch at 637 to 905 folds into the Ras-GAP domain; the sequence is NSQDQAVSNS…PEIYDYFDKL (269 aa). Disordered stretches follow at residues 721–762 and 969–1007; these read SIHE…ERER and NNNG…PDLD. The segment covering 735–754 has biased composition (acidic residues); that stretch reads DVSDDDDDDDDNSSDDDADY. Residues 986–996 show a composition bias toward basic and acidic residues; it reads RDMEREQDRSR. The stretch at 1065–1093 forms a coiled coil; the sequence is NITLKDIQKQSTKIMNKIQELEIYLENYE. Positions 1170–1204 are disordered; sequence NGGMGNRNGHDVNGHNNNNNNNNNNTGDGYNETDR. The segment covering 1183 to 1199 has biased composition (low complexity); sequence GHNNNNNNNNNNTGDGY.

It is found in the cytoplasm. The protein localises to the cell cortex. It localises to the cell tip. The protein resides in the cell septum. GTPase activating protein (GAP) for RSR1 which is involved in the polarization of yeast and hyphal cells. Directs the site of new daughter cell growth in yeast and hyphal cells. Important for hyphae to maintain linear growth and necessary for hyphal responses to directional cues in the environment (tropisms). Required for correct localization of the septin rings and stabilization of the polarisome at hyphal tips. Involved in cell adhesion. This Candida albicans (strain SC5314 / ATCC MYA-2876) (Yeast) protein is GTPase activating protein BUD2 (BUD2).